A 260-amino-acid chain; its full sequence is MADS-box transcription factor 29 (260 aa).

Positions 1-61 (MGRGKIEIKR…GKMFEYCSPT (61 aa)) constitute an MADS-box domain. The 91-residue stretch at 85 to 175 (DQQIFVEMTR…CRMINENHHQ (91 aa)) folds into the K-box domain.

Expressed in developing seeds.

It is found in the nucleus. Functionally, probable transcription factor. This Oryza sativa subsp. japonica (Rice) protein is MADS-box transcription factor 29 (MADS29).